Consider the following 434-residue polypeptide: Serine/threonine-protein kinase Sgk1-A (434 aa).

Residues 66 to 94 form a disordered region; the sequence is PQEPELLNENSSPPPSPSQQINLGPSSNP. Residues 84-94 show a composition bias toward polar residues; that stretch reads QQINLGPSSNP. Residues 101–358 enclose the Protein kinase domain; the sequence is FQFLKIIGKG…FMEIKNHIFF (258 aa). ATP is bound by residues 107–115 and K130; that span reads IGKGSFGKV. The active-site Proton acceptor is the D225. The 76-residue stretch at 359–434 folds into the AGC-kinase C-terminal domain; that stretch reads SPINWDDLIN…SYAPPMESYL (76 aa).

It belongs to the protein kinase superfamily. AGC Ser/Thr protein kinase family.

It is found in the cytoplasm. It localises to the nucleus. Its subcellular location is the endoplasmic reticulum. The enzyme catalyses L-seryl-[protein] + ATP = O-phospho-L-seryl-[protein] + ADP + H(+). It catalyses the reaction L-threonyl-[protein] + ATP = O-phospho-L-threonyl-[protein] + ADP + H(+). In terms of biological role, protein kinase that may play an important role in cellular stress response. Plays an important role in activating certain potassium, sodium, and chloride channels, suggesting an involvement in the regulation of processes such as cell survival, neuronal excitability, and renal sodium excretion. This Xenopus laevis (African clawed frog) protein is Serine/threonine-protein kinase Sgk1-A (sgk1-a).